The sequence spans 569 residues: Arginine--tRNA ligase (569 aa).

The 'HIGH' region motif lies at 123-133 (PNIAKRMHIGH).

The protein belongs to the class-I aminoacyl-tRNA synthetase family. In terms of assembly, monomer.

It localises to the cytoplasm. The enzyme catalyses tRNA(Arg) + L-arginine + ATP = L-arginyl-tRNA(Arg) + AMP + diphosphate. This Fusobacterium nucleatum subsp. nucleatum (strain ATCC 25586 / DSM 15643 / BCRC 10681 / CIP 101130 / JCM 8532 / KCTC 2640 / LMG 13131 / VPI 4355) protein is Arginine--tRNA ligase.